The chain runs to 315 residues: Malate dehydrogenase (315 aa).

Residues 10–15 and D34 contribute to the NAD(+) site; that span reads GAGNVG. Positions 85 and 91 each coordinate substrate. NAD(+)-binding positions include N98 and 121 to 123; that span reads VSN. Substrate contacts are provided by N123 and R154. The Proton acceptor role is filled by H178.

Belongs to the LDH/MDH superfamily. MDH type 3 family.

It catalyses the reaction (S)-malate + NAD(+) = oxaloacetate + NADH + H(+). In terms of biological role, catalyzes the reversible oxidation of malate to oxaloacetate. The chain is Malate dehydrogenase from Rhodopirellula baltica (strain DSM 10527 / NCIMB 13988 / SH1).